A 251-amino-acid chain; its full sequence is Carbohydrate deacetylase (251 aa).

The Mg(2+) site is built by histidine 59 and histidine 122.

Belongs to the YdjC deacetylase family. Homodimer. Mg(2+) serves as cofactor.

Functionally, probably catalyzes the deacetylation of acetylated carbohydrates an important step in the degradation of oligosaccharides. The chain is Carbohydrate deacetylase from Vibrio parahaemolyticus serotype O3:K6 (strain RIMD 2210633).